Consider the following 89-residue polypeptide: Elongation factor 1-beta (89 aa).

The protein belongs to the EF-1-beta/EF-1-delta family.

Promotes the exchange of GDP for GTP in EF-1-alpha/GDP, thus allowing the regeneration of EF-1-alpha/GTP that could then be used to form the ternary complex EF-1-alpha/GTP/AAtRNA. The protein is Elongation factor 1-beta of Methanococcus vannielii (strain ATCC 35089 / DSM 1224 / JCM 13029 / OCM 148 / SB).